Reading from the N-terminus, the 41-residue chain is Iota-conotoxin-like r11d (41 aa).

Cystine bridges form between Cys2-Cys16, Cys9-Cys19, Cys15-Cys24, and Cys18-Cys35. The residue at position 8 (Pro8) is a 4-hydroxyproline. Pro26 is subject to 4-hydroxyproline.

Position 41 corresponds to a L-threonine, and not a D-threonine as firstly supposed. As to expression, expressed by the venom duct.

Its subcellular location is the secreted. Its function is as follows. Iota-conotoxins bind to voltage-gated sodium channels (Nav) and act as agonists by shifting the voltage-dependence of activation to more hyperpolarized levels. Both natural (L-Thr form) and synthetic (D-Thr form) peptides cause paralysis and death following intracranial injection and grooming and hypersensitivity upon intraperitoneal injection into mice. The L-Thr form of the peptide is 7-fold more potent than the D-Thr form. Both natural peptide (L-Thr form) and synthetic peptide (D-Thr form) are active on nerve, and on muscle. This Conus radiatus (Rayed cone) protein is Iota-conotoxin-like r11d.